The sequence spans 285 residues: Probable endonuclease 4 (285 aa).

Zn(2+) is bound by residues His69, His109, Glu145, Asp179, His182, His216, Asp229, His231, and Glu261.

It belongs to the AP endonuclease 2 family. The cofactor is Zn(2+).

It catalyses the reaction Endonucleolytic cleavage to 5'-phosphooligonucleotide end-products.. Endonuclease IV plays a role in DNA repair. It cleaves phosphodiester bonds at apurinic or apyrimidinic (AP) sites, generating a 3'-hydroxyl group and a 5'-terminal sugar phosphate. In Salmonella newport (strain SL254), this protein is Probable endonuclease 4.